The sequence spans 163 residues: Ankyrin repeat domain-containing protein 37 (163 aa).

ANK repeat units lie at residues 29 to 58 (LGQSPAHLAACGGQAFFLLWQLQTGVDVNQ), 62 to 91 (FGEAPIHKAARSGSMECLSLLIASDARIDM), and 95 to 124 (DGHTAEDVALSCGFLDCARYLATIKLTQDT). The short motif at 129–149 (QSSLHNLKETAAGVKRGQCCQ) is the Nuclear localization signal element.

It localises to the nucleus. The protein localises to the cytoplasm. This chain is Ankyrin repeat domain-containing protein 37 (ankrd37), found in Xenopus tropicalis (Western clawed frog).